A 956-amino-acid chain; its full sequence is Glycine dehydrogenase (decarboxylating) (956 aa).

N6-(pyridoxal phosphate)lysine is present on Lys-697.

This sequence belongs to the GcvP family. The glycine cleavage system is composed of four proteins: P, T, L and H. Requires pyridoxal 5'-phosphate as cofactor.

The enzyme catalyses N(6)-[(R)-lipoyl]-L-lysyl-[glycine-cleavage complex H protein] + glycine + H(+) = N(6)-[(R)-S(8)-aminomethyldihydrolipoyl]-L-lysyl-[glycine-cleavage complex H protein] + CO2. In terms of biological role, the glycine cleavage system catalyzes the degradation of glycine. The P protein binds the alpha-amino group of glycine through its pyridoxal phosphate cofactor; CO(2) is released and the remaining methylamine moiety is then transferred to the lipoamide cofactor of the H protein. This Cereibacter sphaeroides (strain KD131 / KCTC 12085) (Rhodobacter sphaeroides) protein is Glycine dehydrogenase (decarboxylating).